The primary structure comprises 380 residues: Cytochrome b (380 aa).

Helical transmembrane passes span 33–53, 77–98, 113–133, and 178–198; these read FGSLLGACLILQITTGLFLAM, WTIRYLHANGASMFFICLFLHI, WNIGIILLLTTMAAAFMGYVL, and FFTFHFILPFIITALTTLHLL. H83 and H97 together coordinate heme b. Positions 182 and 196 each coordinate heme b. H201 provides a ligand contact to a ubiquinone. 4 helical membrane-spanning segments follow: residues 226 to 246, 288 to 308, 320 to 340, and 347 to 367; these read IKDILGLFLFLLTLMTLTLFS, LGGVLALLLSILILAMIPILH, LSQLLYWFLIADLFTLTWIGG, and FITIGQVASVLYFTTILFLMP.

This sequence belongs to the cytochrome b family. As to quaternary structure, the cytochrome bc1 complex contains 11 subunits: 3 respiratory subunits (MT-CYB, CYC1 and UQCRFS1), 2 core proteins (UQCRC1 and UQCRC2) and 6 low-molecular weight proteins (UQCRH/QCR6, UQCRB/QCR7, UQCRQ/QCR8, UQCR10/QCR9, UQCR11/QCR10 and a cleavage product of UQCRFS1). This cytochrome bc1 complex then forms a dimer. Requires heme b as cofactor.

It localises to the mitochondrion inner membrane. Functionally, component of the ubiquinol-cytochrome c reductase complex (complex III or cytochrome b-c1 complex) that is part of the mitochondrial respiratory chain. The b-c1 complex mediates electron transfer from ubiquinol to cytochrome c. Contributes to the generation of a proton gradient across the mitochondrial membrane that is then used for ATP synthesis. In Gorilla gorilla gorilla (Western lowland gorilla), this protein is Cytochrome b (MT-CYB).